Here is a 454-residue protein sequence, read N- to C-terminus: Bifunctional protein GlmU (454 aa).

The interval 1–232 (MTDRTCLSIV…VDNVIGINNR (232 aa)) is pyrophosphorylase. Residues 11-14 (LAAG), K25, Q78, and 83-84 (GT) each bind UDP-N-acetyl-alpha-D-glucosamine. D108 is a Mg(2+) binding site. UDP-N-acetyl-alpha-D-glucosamine contacts are provided by G144, E158, N173, and N230. Position 230 (N230) interacts with Mg(2+). Positions 233 to 253 (AELAEAETIWQNRKRRELMLS) are linker. An N-acetyltransferase region spans residues 254-454 (GVTLIAPETV…AIKAAKSVSK (201 aa)). Positions 319 and 337 each coordinate UDP-N-acetyl-alpha-D-glucosamine. H349 serves as the catalytic Proton acceptor. UDP-N-acetyl-alpha-D-glucosamine contacts are provided by Y352 and N363. Acetyl-CoA is bound by residues A366, 372–373 (NY), S391, S409, and R426.

This sequence in the N-terminal section; belongs to the N-acetylglucosamine-1-phosphate uridyltransferase family. In the C-terminal section; belongs to the transferase hexapeptide repeat family. As to quaternary structure, homotrimer. Mg(2+) serves as cofactor.

It localises to the cytoplasm. The catalysed reaction is alpha-D-glucosamine 1-phosphate + acetyl-CoA = N-acetyl-alpha-D-glucosamine 1-phosphate + CoA + H(+). The enzyme catalyses N-acetyl-alpha-D-glucosamine 1-phosphate + UTP + H(+) = UDP-N-acetyl-alpha-D-glucosamine + diphosphate. The protein operates within nucleotide-sugar biosynthesis; UDP-N-acetyl-alpha-D-glucosamine biosynthesis; N-acetyl-alpha-D-glucosamine 1-phosphate from alpha-D-glucosamine 6-phosphate (route II): step 2/2. It functions in the pathway nucleotide-sugar biosynthesis; UDP-N-acetyl-alpha-D-glucosamine biosynthesis; UDP-N-acetyl-alpha-D-glucosamine from N-acetyl-alpha-D-glucosamine 1-phosphate: step 1/1. Its pathway is bacterial outer membrane biogenesis; LPS lipid A biosynthesis. Functionally, catalyzes the last two sequential reactions in the de novo biosynthetic pathway for UDP-N-acetylglucosamine (UDP-GlcNAc). The C-terminal domain catalyzes the transfer of acetyl group from acetyl coenzyme A to glucosamine-1-phosphate (GlcN-1-P) to produce N-acetylglucosamine-1-phosphate (GlcNAc-1-P), which is converted into UDP-GlcNAc by the transfer of uridine 5-monophosphate (from uridine 5-triphosphate), a reaction catalyzed by the N-terminal domain. This is Bifunctional protein GlmU from Brucella abortus (strain S19).